Here is a 301-residue protein sequence, read N- to C-terminus: MTALNRAVASARVGTEVIRVRGLTFRYPKAAEPAVRGMEFTVGRGEIFGLLGPSGAGKSTTQKLLIGLLRDHGGQATVWDKEPAEWGPDYYERIGVSFELPNHYQKLTGYENLRFFASLYAGATADPMQLLAAVGLADDAHTLVGKYSKGMQMRLTFARSLINDPELLFLDEPTSGLDPVNARKIKDIIVDLKARGRTIFLTTHDMATADELCDRVAFVVDGRIVALDSPTELKIARSRRRVRVEYRGDGGGLETAEFGMDGLADDPAFHSVLRNHHVETIHSREASLDDVFVEVTGRQLT.

The region spanning 18-246 (IRVRGLTFRY…RSRRRVRVEY (229 aa)) is the ABC transporter domain. Residue 52-59 (GPSGAGKS) participates in ATP binding.

The protein belongs to the ABC transporter superfamily. As to quaternary structure, the complex is composed of 2 ATP-binding proteins and 2 transmembrane proteins.

It localises to the cell membrane. Its function is as follows. Part of the ABC transporter complex involved in fluoroquinolones export. Probably responsible for energy coupling to the transport system. This is Fluoroquinolones export ATP-binding protein MT2762 from Mycobacterium tuberculosis (strain CDC 1551 / Oshkosh).